The sequence spans 642 residues: Arginine--tRNA ligase (642 aa).

The 'HIGH' region signature appears at 133-143 (VNPTKPLHMGH).

The protein belongs to the class-I aminoacyl-tRNA synthetase family.

The protein localises to the cytoplasm. The catalysed reaction is tRNA(Arg) + L-arginine + ATP = L-arginyl-tRNA(Arg) + AMP + diphosphate. The polypeptide is Arginine--tRNA ligase (Thermococcus kodakarensis (strain ATCC BAA-918 / JCM 12380 / KOD1) (Pyrococcus kodakaraensis (strain KOD1))).